The sequence spans 854 residues: Protein ROOT HAIR DEFECTIVE 3 homolog 1 (854 aa).

Topologically, residues 1–680 (MDEAAAAEAV…QAHKRGNGRL (680 aa)) are cytoplasmic. A GB1/RHD3-type G domain is found at 37–252 (GLSYAVVSIM…IAPGGLAGDR (216 aa)). 47-54 (GPQSSGKS) is a binding site for GTP. Residues 217–242 (ALPSFEEKEEQFREQVQQLRQRFSNS) are a coiled coil. A helical transmembrane segment spans residues 681-701 (PPPWAMVAIAVLGFNEIMTLL). The Lumenal portion of the chain corresponds to 702-704 (RNP). A helical membrane pass occupies residues 705–725 (IYLFLLFVGYLLVKALAVQLD). Over 726–854 (INREFQNGVV…NESNNAYSIV (129 aa)) the chain is Cytoplasmic. Low complexity-rich tracts occupy residues 758 to 781 (TEQQ…QQQP) and 814 to 828 (VSPS…VTSP). A disordered region spans residues 758–854 (TEQQQQQGHH…NESNNAYSIV (97 aa)). Positions 842–854 (QPDNESNNAYSIV) are enriched in polar residues.

The protein belongs to the TRAFAC class dynamin-like GTPase superfamily. GB1/RHD3 GTPase family. RHD3 subfamily.

The protein resides in the endoplasmic reticulum membrane. In terms of biological role, probable GTP-binding protein that may be involved in cell development. This is Protein ROOT HAIR DEFECTIVE 3 homolog 1 from Oryza sativa subsp. japonica (Rice).